The chain runs to 932 residues: Protocadherin gamma-A6 (932 aa).

A signal peptide spans 1–29 (MAPPQRHPQRSEQVLLLTLLGTLWGAAAA). 6 Cadherin domains span residues 30 to 133 (QIRY…TPRF), 134 to 242 (LKEE…TPMF), 243 to 347 (TQPV…VPEV), 348 to 452 (VVTS…PPTF), 453 to 562 (PHSS…APEI), and 570 to 682 (DGST…EPSA). Over 30–692 (QIRYSIPEEL…KPNDSDLTLY (663 aa)) the chain is Extracellular. Asn-81 is a glycosylation site (N-linked (GlcNAc...) asparagine). Residues Asn-419 and Asn-545 are each glycosylated (N-linked (GlcNAc...) asparagine). N-linked (GlcNAc...) asparagine glycosylation occurs at Asn-685. The helical transmembrane segment at 693–713 (LVVAVAAVSCVFLAFVIVLLA) threads the bilayer. Topologically, residues 714-932 (LRLQRWHKSR…KKKSGKKEKK (219 aa)) are cytoplasmic. 2 disordered regions span residues 804–841 (PRQL…WPNN) and 902–932 (ATLT…KEKK). Over residues 806–841 (QLQQAPPNTDWRFSQAQRPGTSGSQNGDDTGTWPNN) the composition is skewed to polar residues. Positions 922 to 932 (NKKKSGKKEKK) are enriched in basic residues.

The protein resides in the cell membrane. Its function is as follows. Potential calcium-dependent cell-adhesion protein. May be involved in the establishment and maintenance of specific neuronal connections in the brain. The chain is Protocadherin gamma-A6 (PCDHGA6) from Homo sapiens (Human).